Here is a 200-residue protein sequence, read N- to C-terminus: Small ribosomal subunit protein uS4 (200 aa).

The interval 22 to 42 is disordered; it reads TGKELEKRPYAPGPHGPGQRK. Residues 92-152 enclose the S4 RNA-binding domain; it reads SRLDNIVYRL…EKSQNLSVVK (61 aa).

It belongs to the universal ribosomal protein uS4 family. In terms of assembly, part of the 30S ribosomal subunit. Contacts protein S5. The interaction surface between S4 and S5 is involved in control of translational fidelity.

In terms of biological role, one of the primary rRNA binding proteins, it binds directly to 16S rRNA where it nucleates assembly of the body of the 30S subunit. Its function is as follows. With S5 and S12 plays an important role in translational accuracy. This is Small ribosomal subunit protein uS4 from Bacillus licheniformis (strain ATCC 14580 / DSM 13 / JCM 2505 / CCUG 7422 / NBRC 12200 / NCIMB 9375 / NCTC 10341 / NRRL NRS-1264 / Gibson 46).